The following is a 515-amino-acid chain: ATP synthase subunit alpha (515 aa).

171-178 (GDRQTGKT) serves as a coordination point for ATP.

This sequence belongs to the ATPase alpha/beta chains family. As to quaternary structure, F-type ATPases have 2 components, CF(1) - the catalytic core - and CF(0) - the membrane proton channel. CF(1) has five subunits: alpha(3), beta(3), gamma(1), delta(1), epsilon(1). CF(0) has three main subunits: a(1), b(2) and c(9-12). The alpha and beta chains form an alternating ring which encloses part of the gamma chain. CF(1) is attached to CF(0) by a central stalk formed by the gamma and epsilon chains, while a peripheral stalk is formed by the delta and b chains.

It localises to the cell inner membrane. The catalysed reaction is ATP + H2O + 4 H(+)(in) = ADP + phosphate + 5 H(+)(out). Functionally, produces ATP from ADP in the presence of a proton gradient across the membrane. The alpha chain is a regulatory subunit. This Coxiella burnetii (strain CbuK_Q154) (Coxiella burnetii (strain Q154)) protein is ATP synthase subunit alpha.